The primary structure comprises 301 residues: Acetylglutamate kinase (301 aa).

Substrate-binding positions include 72 to 73 (GG), Arg-94, and Asn-199.

Belongs to the acetylglutamate kinase family. ArgB subfamily.

It localises to the cytoplasm. It carries out the reaction N-acetyl-L-glutamate + ATP = N-acetyl-L-glutamyl 5-phosphate + ADP. It functions in the pathway amino-acid biosynthesis; L-arginine biosynthesis; N(2)-acetyl-L-ornithine from L-glutamate: step 2/4. In terms of biological role, catalyzes the ATP-dependent phosphorylation of N-acetyl-L-glutamate. The polypeptide is Acetylglutamate kinase (Bartonella tribocorum (strain CIP 105476 / IBS 506)).